Here is a 146-residue protein sequence, read N- to C-terminus: Hemoglobin subunit beta (146 aa).

At Val-1 the chain carries N-acetylvaline. One can recognise a Globin domain in the interval His-2–His-146. At Thr-12 the chain carries Phosphothreonine. Position 44 is a phosphoserine (Ser-44). The residue at position 59 (Lys-59) is an N6-acetyllysine. His-63 provides a ligand contact to heme b. Residue Lys-82 is modified to N6-acetyllysine. His-92 contributes to the heme b binding site. Cys-93 is modified (S-nitrosocysteine). Position 144 is an N6-acetyllysine (Lys-144).

It belongs to the globin family. Heterotetramer of two alpha chains and two beta chains. As to expression, red blood cells.

Involved in oxygen transport from the lung to the various peripheral tissues. In Peromyscus crinitus (Canyon mouse), this protein is Hemoglobin subunit beta.